We begin with the raw amino-acid sequence, 264 residues long: S-adenosylmethionine decarboxylase proenzyme (264 aa).

The active-site Schiff-base intermediate with substrate; via pyruvic acid is the S113. S113 is modified (pyruvic acid (Ser); by autocatalysis). H118 functions as the Proton acceptor; for processing activity in the catalytic mechanism. The active-site Proton donor; for catalytic activity is the C141.

Belongs to the prokaryotic AdoMetDC family. Type 2 subfamily. As to quaternary structure, heterooctamer of four alpha and four beta chains arranged as a tetramer of alpha/beta heterodimers. Requires pyruvate as cofactor. Is synthesized initially as an inactive proenzyme. Formation of the active enzyme involves a self-maturation process in which the active site pyruvoyl group is generated from an internal serine residue via an autocatalytic post-translational modification. Two non-identical subunits are generated from the proenzyme in this reaction, and the pyruvate is formed at the N-terminus of the alpha chain, which is derived from the carboxyl end of the proenzyme. The post-translation cleavage follows an unusual pathway, termed non-hydrolytic serinolysis, in which the side chain hydroxyl group of the serine supplies its oxygen atom to form the C-terminus of the beta chain, while the remainder of the serine residue undergoes an oxidative deamination to produce ammonia and the pyruvoyl group blocking the N-terminus of the alpha chain.

The enzyme catalyses S-adenosyl-L-methionine + H(+) = S-adenosyl 3-(methylsulfanyl)propylamine + CO2. It participates in amine and polyamine biosynthesis; S-adenosylmethioninamine biosynthesis; S-adenosylmethioninamine from S-adenosyl-L-methionine: step 1/1. Functionally, catalyzes the decarboxylation of S-adenosylmethionine to S-adenosylmethioninamine (dcAdoMet), the propylamine donor required for the synthesis of the polyamines spermine and spermidine from the diamine putrescine. The protein is S-adenosylmethionine decarboxylase proenzyme of Pseudomonas aeruginosa (strain UCBPP-PA14).